The sequence spans 342 residues: MAQVLIVGAGMTGSLCAALLRRQTSGPLYLAVWDKAEDSGGRMTTACSPHNPQCTADLGAQYITCTPHYAKKHQRFYDELLAYGVLRPLSSPIEGMVMKEGDCNFVAPQGISSIIKHYLKESGAEVYFRHRVTQINLRDDKWEVSKQTGSPEQFDLIVLTMPVPEILQLQGDITTLISECQRQQLEAVSYSSRYALGLFYEAGTKIDVPWAGQYITSNPCIRFVSIDNKKRNIESSEIGPSLVIHTTVPFGVTYLEHSIEDVQELVFQQLENILPGLPQPIATKCQKWRHSQVTNAAANCPGQMTLHHKPFLACGGDGFTQSNFDGCITSALCVLEALKNYI.

Positions 1-17 (MAQVLIVGAGMTGSLCA) are cleaved as a signal peptide. Residues threonine 12, arginine 42, and 61–62 (QY) each bind FAD.

This sequence belongs to the renalase family. FAD is required as a cofactor. Secreted into the blood by the kidney. Highly expressed in the kidney, expressed at lower level in heart, skeletal muscle and small intestine. Its plasma concentration is markedly reduced in patients with end-stage renal disease, as compared with healthy subjects.

Its subcellular location is the secreted. The catalysed reaction is 1,2-dihydro-beta-NAD + O2 + H(+) = H2O2 + NAD(+). It carries out the reaction 1,2-dihydro-beta-NADP + O2 + H(+) = H2O2 + NADP(+). It catalyses the reaction 1,6-dihydro-beta-NADP + O2 + H(+) = H2O2 + NADP(+). The enzyme catalyses 1,6-dihydro-beta-NAD + O2 + H(+) = H2O2 + NAD(+). In terms of biological role, catalyzes the oxidation of the less abundant 1,2-dihydro-beta-NAD(P) and 1,6-dihydro-beta-NAD(P) to form beta-NAD(P)(+). The enzyme hormone is secreted by the kidney, and circulates in blood and modulates cardiac function and systemic blood pressure. Lowers blood pressure in vivo by decreasing cardiac contractility and heart rate and preventing a compensatory increase in peripheral vascular tone, suggesting a causal link to the increased plasma catecholamine and heightened cardiovascular risk. High concentrations of catecholamines activate plasma renalase and promotes its secretion and synthesis. The sequence is that of Renalase (RNLS) from Homo sapiens (Human).